Reading from the N-terminus, the 182-residue chain is MAIAESFKVEDGFSVLAGVVARRDGTVEAVAVDTATVGGTDATEAAVRIAERLLKPDVSIIMLDGCVVSFYNWIDGEALWRRFGVPVACYVFEDPEGRVEEAVKKLFKDWELRIEAIRRLGWPTPYYTKSGYKIYIRSWGIDPADAGRAAELCAKFGKWPEPIRVAQLVASGVREYLSRRSR.

This sequence belongs to the UPF0215 family.

This is UPF0215 protein Pcal_0119 from Pyrobaculum calidifontis (strain DSM 21063 / JCM 11548 / VA1).